Reading from the N-terminus, the 312-residue chain is Urease accessory protein 7 (312 aa).

The segment at glutamine 28–glutamate 86 is disordered. The tract at residues histidine 36 to histidine 87 is histine rich nickel-binding domain. A compositionally biased stretch (basic and acidic residues) spans histidine 53–glutamate 86. The short motif at glycine 115–threonine 122 is the GTP binding P-loop element. The Switch domain 1 motif lies at threonine 147–leucine 154. The switch domain 2 motif lies at glycine 171 to glycine 172.

The protein belongs to the SIMIBI class G3E GTPase family. UreG subfamily. URE4, URE6 and URE7 may form a complex that acts as a GTP-hydrolysis-dependent molecular chaperone, activating the urease apoprotein URE1.

Urease accessory protein that binds 2 nickel atoms likely via its conserved histidine-rich domain and supplies nickel for the functional urease URE1. Has probably a dual function as a nickel chaperone and GTPase. Plays a role in host brain invasion. The sequence is that of Urease accessory protein 7 from Cryptococcus neoformans var. grubii serotype A (strain H99 / ATCC 208821 / CBS 10515 / FGSC 9487) (Filobasidiella neoformans var. grubii).